Consider the following 477-residue polypeptide: Histone-lysine N-methyltransferase SUV39H2 (477 aa).

The disordered stretch occupies residues 1-59 (MATARAKARGSEAGARCHRAPGPPPRPKARRTARRRRAETLTARRSRPSAGERRAGSQR). Over residues 27–37 (PKARRTARRRR) the composition is skewed to basic residues. Residues 118 to 176 (YEVEYLCDYKVAKGVEYYLVKWKGWPDSTNTWEPLRNLRCPQLLRQFSDDKKTYLAQER) enclose the Chromo domain. The region spanning 256-314 (FGCSCTDCFFDKCCPAEAGVVLAYNKKQQIKIQPGTPIYECNSRCRCGPECPNRIVQKG) is the Pre-SET domain. Zn(2+) contacts are provided by C258, C260, C263, C268, C269, C296, C300, C302, and C306. The 124-residue stretch at 317 to 440 (YSLCIFKTSN…AGEELTFDYQ (124 aa)) folds into the SET domain. Residues 328–330 (CGW), Y371, and 397–398 (NH) each bind S-adenosyl-L-methionine. C400 is a binding site for Zn(2+). Residues S448, S451, and S455 each carry the phosphoserine modification. Positions 461–477 (VRTQCKCGAETCRGYLN) constitute a Post-SET domain. Residues C465, C467, and C472 each contribute to the Zn(2+) site.

This sequence belongs to the class V-like SAM-binding methyltransferase superfamily. Histone-lysine methyltransferase family. Suvar3-9 subfamily. In terms of assembly, interacts with SMAD5. The large PER complex involved in the histone methylation is composed of at least PER2, CBX3, TRIM28, SUV39H1 and/or SUV39H2; CBX3 mediates the formation of the complex. Post-translationally, ubiquitinated by the DCX(DCAF13) E3 ubiquitin ligase complex, leading to its degradation. In terms of tissue distribution, testis specific; predominant expression in type B spermatogonia and preleptotene spermatocytes.

It localises to the nucleus. It is found in the chromosome. The protein localises to the centromere. The catalysed reaction is L-lysyl(9)-[histone H3] + 3 S-adenosyl-L-methionine = N(6),N(6),N(6)-trimethyl-L-lysyl(9)-[histone H3] + 3 S-adenosyl-L-homocysteine + 3 H(+). Functionally, histone methyltransferase that specifically trimethylates 'Lys-9' of histone H3 using monomethylated H3 'Lys-9' as substrate. H3 'Lys-9' trimethylation represents a specific tag for epigenetic transcriptional repression by recruiting HP1 (CBX1, CBX3 and/or CBX5) proteins to methylated histones. Mainly functions in heterochromatin regions, thereby playing a central role in the establishment of constitutive heterochromatin at pericentric and telomere regions. H3 'Lys-9' trimethylation is also required to direct DNA methylation at pericentric repeats. SUV39H1 is targeted to histone H3 via its interaction with RB1 and is involved in many processes, such as cell cycle regulation, transcriptional repression and regulation of telomere length. May participate in regulation of higher-order chromatin organization during spermatogenesis. Recruited by the large PER complex to the E-box elements of the circadian target genes such as PER2 itself or PER1, contributes to the conversion of local chromatin to a heterochromatin-like repressive state through H3 'Lys-9' trimethylation. The protein is Histone-lysine N-methyltransferase SUV39H2 (Suv39h2) of Mus musculus (Mouse).